A 451-amino-acid polypeptide reads, in one-letter code: POC1 centriolar protein homolog B (451 aa).

WD repeat units follow at residues 16-55 (GHKA…RAYR), 58-99 (GHKD…SEFK), 101-139 (HTAP…FLYS), 142-181 (RHTH…CVNN), 183-223 (SDSV…LLQH), 226-265 (VHSG…LIYT), and 268-307 (GHTG…LHCK). Residue Ser321 is modified to Phosphoserine. A disordered region spans residues 372–394 (PECSPTTTKKKTEDMSDLPSESQ). Residues 404–443 (ALEHIMEQLNVLTQTVSILEQRLTLTEDKLKDCLENQQKL) are a coiled coil.

It belongs to the WD repeat POC1 family. Interacts with POC1A. Interacts with FAM161A. Interacts with CEP44; the interaction is direct and recruits POC1B to centriolar microtubules. Forms a microtubule-associated complex with POC5, CETN2 and FAM161A. Interacts with CCDC15. In terms of processing, phosphorylated in mitotic cells that may be mediated by CDK1.

The protein resides in the cytoplasm. It localises to the cytoskeleton. Its subcellular location is the microtubule organizing center. The protein localises to the centrosome. It is found in the centriole. The protein resides in the cilium basal body. It localises to the spindle pole. Plays an important role in centriole assembly and/or stability and ciliogenesis. Involved in early steps of centriole duplication, as well as in the later steps of centriole length control. Acts in concert with POC1A to ensure centriole integrity and proper mitotic spindle formation. Required for primary cilia formation, ciliary length and also cell proliferation. Required for retinal integrity. Acts as a positive regulator of centriole elongation. This is POC1 centriolar protein homolog B (POC1B) from Pongo abelii (Sumatran orangutan).